The sequence spans 230 residues: Leucyl/phenylalanyl-tRNA--protein transferase (230 aa).

It belongs to the L/F-transferase family.

It localises to the cytoplasm. The enzyme catalyses N-terminal L-lysyl-[protein] + L-leucyl-tRNA(Leu) = N-terminal L-leucyl-L-lysyl-[protein] + tRNA(Leu) + H(+). The catalysed reaction is N-terminal L-arginyl-[protein] + L-leucyl-tRNA(Leu) = N-terminal L-leucyl-L-arginyl-[protein] + tRNA(Leu) + H(+). It carries out the reaction L-phenylalanyl-tRNA(Phe) + an N-terminal L-alpha-aminoacyl-[protein] = an N-terminal L-phenylalanyl-L-alpha-aminoacyl-[protein] + tRNA(Phe). Functionally, functions in the N-end rule pathway of protein degradation where it conjugates Leu, Phe and, less efficiently, Met from aminoacyl-tRNAs to the N-termini of proteins containing an N-terminal arginine or lysine. This is Leucyl/phenylalanyl-tRNA--protein transferase from Erwinia tasmaniensis (strain DSM 17950 / CFBP 7177 / CIP 109463 / NCPPB 4357 / Et1/99).